Consider the following 37-residue polypeptide: Large ribosomal subunit protein bL36 (37 aa).

It belongs to the bacterial ribosomal protein bL36 family.

The protein is Large ribosomal subunit protein bL36 of Mesomycoplasma hyopneumoniae (strain 7448) (Mycoplasma hyopneumoniae).